Reading from the N-terminus, the 249-residue chain is NAD kinase (249 aa).

The active-site Proton acceptor is the Asp-45. Residues 45-46, Arg-50, 110-111, Asp-138, and 149-154 each bind NAD(+); these read DG, NE, and SGWGMS.

Belongs to the NAD kinase family. It depends on a divalent metal cation as a cofactor.

Its subcellular location is the cytoplasm. The enzyme catalyses NAD(+) + ATP = ADP + NADP(+) + H(+). In terms of biological role, involved in the regulation of the intracellular balance of NAD and NADP, and is a key enzyme in the biosynthesis of NADP. Catalyzes specifically the phosphorylation on 2'-hydroxyl of the adenosine moiety of NAD to yield NADP. This chain is NAD kinase, found in Saccharolobus solfataricus (strain ATCC 35092 / DSM 1617 / JCM 11322 / P2) (Sulfolobus solfataricus).